Consider the following 969-residue polypeptide: Endogenous retrovirus group K member 11 Pol protein (969 aa).

Positions 57–245 (LEKGHIEPSF…TPFHYLGMQI (189 aa)) constitute a Reverse transcriptase domain. The LPQG signature appears at 161 to 164 (LPQG). Positions 460 to 590 (LENALTVFTD…ADLLVSSALI (131 aa)) constitute an RNase H type-1 domain. Asp469, Glu497, Asp517, and Asp582 together coordinate Mg(2+). The segment at 587-628 (SALIKAQELHALTHVNAAGLKNKFDVTWKQAKDIVQHCTQCQ) adopts an Integrase-type zinc-finger fold. Positions 596, 600, 624, and 627 each coordinate Zn(2+). Residues 642-803 (RGLCPNALWQ…TSAEQHLTGK (162 aa)) enclose the Integrase catalytic domain. A DNA-binding region (integrase-type) is located at residues 811-859 (KLIWWKDNKNKTWEIGKVITWGRGFACVSPGENQLPVWIPTRHLKFYNE).

Belongs to the beta type-B retroviral polymerase family. HERV class-II K(HML-2) pol subfamily.

It catalyses the reaction DNA(n) + a 2'-deoxyribonucleoside 5'-triphosphate = DNA(n+1) + diphosphate. It carries out the reaction Endonucleolytic cleavage to 5'-phosphomonoester.. In terms of biological role, early post-infection, the reverse transcriptase converts the viral RNA genome into double-stranded viral DNA. The RNase H domain of the reverse transcriptase performs two functions. It degrades the RNA template and specifically removes the RNA primer from the RNA/DNA hybrid. Following nuclear import, the integrase catalyzes the insertion of the linear, double-stranded viral DNA into the host cell chromosome. Endogenous Pol proteins may have kept, lost or modified their original function during evolution. The chain is Endogenous retrovirus group K member 11 Pol protein (ERVK-11) from Homo sapiens (Human).